Consider the following 517-residue polypeptide: Transmembrane protein 180 (517 aa).

Over 1–11 the chain is Extracellular; that stretch reads MRLGGPWAWLL. The chain crosses the membrane as a helical span at residues 12-43; the sequence is GLPTAVVYGSLALFVSVLHNVFLLYYVDTFVS. At 44–55 the chain is on the cytoplasmic side; that stretch reads VYKIDKAAFWVG. The chain crosses the membrane as a helical span at residues 56 to 74; the sequence is ETVFLLWNSLNDPLFGWLS. Over 75–100 the chain is Extracellular; sequence DRQFLSSQPRSGAGLSSRAVVLARVR. The chain crosses the membrane as a helical span at residues 101–118; it reads ALGWHGPLLALSFLAFWV. At 119 to 126 the chain is on the cytoplasmic side; it reads PWAPAGLQ. Residues 127-151 traverse the membrane as a helical segment; the sequence is FLLCLCLYDGFLTLVDLHHHALLAD. At 152–155 the chain is on the extracellular side; it reads LALS. A helical transmembrane segment spans residues 156–179; sequence AHDRTHLNFYCSLFSAAGSLSVFA. At 180 to 191 the chain is on the cytoplasmic side; sequence SYAFWNKEDFSS. Residues 192–223 form a helical membrane-spanning segment; sequence FRAFCLALATGSGLGFVGAARLLRRRVEAAGR. Topologically, residues 224-264 are extracellular; sequence EPGCPAMAVNDGLCEEELLVGGEEAGSITLGQYLQQLARHR. A helical transmembrane segment spans residues 265–292; the sequence is NFLWFVGMDLVQVFHCHFNSNFFPLFLE. At 293-305 the chain is on the cytoplasmic side; sequence HLLSDHISLSTGS. A helical transmembrane segment spans residues 306-325; the sequence is FLLGISYVAPHLNNLYFLPL. Topologically, residues 326-330 are extracellular; the sequence is CRRWG. The helical transmembrane segment at 331–350 threads the bilayer; the sequence is VYAVVRGLFLLKLGLSLLML. Over 351 to 358 the chain is Cytoplasmic; it reads LAGPDHPG. A helical membrane pass occupies residues 359-393; it reads LLCLFIASNRVFTEGTCKLLTLVVTDLVDEDLVLN. Over 394 to 402 the chain is Extracellular; sequence HRKQAASAL. Residues 403–429 form a helical membrane-spanning segment; it reads LFGMVALVTKPGQTFAPLLGTWLLCFY. At 430 to 466 the chain is on the cytoplasmic side; sequence TGHDLFQQHPPAPVGSAQPWPEPPAPPPAQAPPLRQG. A helical membrane pass occupies residues 467 to 485; sequence CFYLLVLVPIACALLQLFT. Over 486 to 517 the chain is Extracellular; the sequence is WSQFTLHGRRLHMVKAQRQSLSRAQTLDVKMV.

It localises to the cell membrane. This Bos taurus (Bovine) protein is Transmembrane protein 180.